The chain runs to 137 residues: Acidic phospholipase A2 PL-I (137 aa).

The N-terminal stretch at 1–17 (AVCVSLLGASSIRPLPL) is a signal peptide. Disulfide bonds link C28–C89, C44–C136, C46–C62, C61–C117, C68–C110, C78–C103, and C96–C108. The Ca(2+) site is built by Y45, G47, and G49. Residue H65 is part of the active site. Position 66 (D66) interacts with Ca(2+). Residue D111 is part of the active site.

The cofactor is Ca(2+). In terms of tissue distribution, expressed by the venom gland.

It localises to the secreted. The enzyme catalyses a 1,2-diacyl-sn-glycero-3-phosphocholine + H2O = a 1-acyl-sn-glycero-3-phosphocholine + a fatty acid + H(+). Functionally, snake venom phospholipase A2 (PLA2) that may act in the hemostasis system of the prey. Exhibits hydrolytic activities, and prefers the anionic micelles (dPPC with deoxycholate) (793 umol/mg/min) to the zwitterionic micelles (dPPC with Triton X-100) (591 umol/mg/min). PLA2 catalyzes the calcium-dependent hydrolysis of the 2-acyl groups in 3-sn-phosphoglycerides. The chain is Acidic phospholipase A2 PL-I from Walterinnesia aegyptia (Desert black snake).